The following is a 167-amino-acid chain: Intermembrane phospholipid transport system binding protein MlaD (167 aa).

Over 1–6 (MRQTIK) the chain is Cytoplasmic. Residues 7–27 (YEFWVGLFLLLGIGALVFLGL) form a helical; Signal-anchor for type II membrane protein membrane-spanning segment. The Periplasmic portion of the chain corresponds to 28-167 (RVANVQGFAE…GNEKSESTEQ (140 aa)). The interval 40–118 (SYTVTATFDN…GEQYIALTMG (79 aa)) is MCE/MlaD.

Belongs to the MlaD family. In terms of assembly, the complex is composed of two ATP-binding proteins (MlaF), two transmembrane proteins (MlaE), two cytoplasmic solute-binding proteins (MlaB) and six periplasmic solute-binding proteins (MlaD).

It is found in the cell inner membrane. Functionally, part of the ABC transporter complex MlaFEDB, which is involved in a phospholipid transport pathway that maintains lipid asymmetry in the outer membrane by retrograde trafficking of phospholipids from the outer membrane to the inner membrane. MlaD functions in substrate binding with strong affinity for phospholipids and modulates ATP hydrolytic activity of the complex. This chain is Intermembrane phospholipid transport system binding protein MlaD, found in Haemophilus influenzae (strain ATCC 51907 / DSM 11121 / KW20 / Rd).